Reading from the N-terminus, the 457-residue chain is tRNA-2-methylthio-N(6)-dimethylallyladenosine synthase (457 aa).

The MTTase N-terminal domain maps to 3–120; the sequence is KKVYVKTFGC…LPQMIDARRT (118 aa). [4Fe-4S] cluster contacts are provided by Cys12, Cys49, Cys83, Cys157, Cys161, and Cys164. A Radical SAM core domain is found at 143–377; the sequence is RVEGPTAFVS…QATIEENVAR (235 aa). The TRAM domain maps to 380–447; sequence QSMVGKVERI…PHSLRGELVL (68 aa).

The protein belongs to the methylthiotransferase family. MiaB subfamily. In terms of assembly, monomer. It depends on [4Fe-4S] cluster as a cofactor.

It is found in the cytoplasm. It carries out the reaction N(6)-dimethylallyladenosine(37) in tRNA + (sulfur carrier)-SH + AH2 + 2 S-adenosyl-L-methionine = 2-methylsulfanyl-N(6)-dimethylallyladenosine(37) in tRNA + (sulfur carrier)-H + 5'-deoxyadenosine + L-methionine + A + S-adenosyl-L-homocysteine + 2 H(+). Its function is as follows. Catalyzes the methylthiolation of N6-(dimethylallyl)adenosine (i(6)A), leading to the formation of 2-methylthio-N6-(dimethylallyl)adenosine (ms(2)i(6)A) at position 37 in tRNAs that read codons beginning with uridine. This is tRNA-2-methylthio-N(6)-dimethylallyladenosine synthase from Burkholderia multivorans (strain ATCC 17616 / 249).